We begin with the raw amino-acid sequence, 331 residues long: Flavonol synthase 1 (331 aa).

The Fe2OG dioxygenase domain occupies 191–292; sequence DAIELLLKIN…RMSWPVFCSP (102 aa). Residues His-217, Asp-219, and His-273 each contribute to the Fe cation site. Arg-283 contributes to the 2-oxoglutarate binding site.

The protein belongs to the iron/ascorbate-dependent oxidoreductase family. Requires L-ascorbate as cofactor. It depends on Fe(2+) as a cofactor. Expressed in young cromes.

It catalyses the reaction a (2R,3R)-dihydroflavonol + 2-oxoglutarate + O2 = a flavonol + succinate + CO2 + H2O. The catalysed reaction is (2R,3R)-dihydrokaempferol + 2-oxoglutarate + O2 = kaempferol + succinate + CO2 + H2O + H(+). The enzyme catalyses (2R,3R)-dihydroquercetin + 2-oxoglutarate + O2 = quercetin + succinate + CO2 + H2O + H(+). It carries out the reaction (2R,3R)-dihydromyricetin + 2-oxoglutarate + O2 = myricetin + succinate + CO2 + H2O + H(+). The protein operates within flavonoid metabolism. In terms of biological role, catalyzes the formation of flavonols from dihydroflavonols. Can act on dihydrokaempferol to produce kaempferol, on dihydroquercetin to produce quercitin and on dihydromyricetin to produce myricetin. The protein is Flavonol synthase 1 of Crocosmia x crocosmiiflora (Montbretia).